The primary structure comprises 828 residues: Toll-like receptor 4 (828 aa).

A signal peptide spans 1–23 (MMSASRLAGTLIPAMAFLSCVRP). The Extracellular portion of the chain corresponds to 24–629 (ESWEPCVVPN…SLNITCQMNK (606 aa)). A disulfide bridge links cysteine 29 with cysteine 38. Residue asparagine 33 is glycosylated (N-linked (GlcNAc...) asparagine). LRR repeat units lie at residues 53 to 74 (STKN…SFFS), 77 to 98 (ELQV…AYQS), 101 to 122 (HLST…AFSG), 125 to 146 (SLQK…PIGH), and 149 to 170 (TLKE…EYFS). A glycan (N-linked (GlcNAc...) asparagine) is linked at asparagine 171. LRR repeat units lie at residues 174–195 (NLEH…DLQV), 203–223 (NLSL…AFKE), and 225–245 (RLHK…KTCI). Asparagine 203 carries an N-linked (GlcNAc...) asparagine glycan. An intrachain disulfide couples cysteine 279 to cysteine 304. Asparagine 280 and asparagine 307 each carry an N-linked (GlcNAc...) asparagine glycan. LRR repeat units follow at residues 372–392 (SLEF…CSQS), 398–420 (SLKY…LGLE), 421–442 (QLEH…SVFL), 446–454 (NLIYLDISH), 470–493 (SLKV…FTEL), 495–516 (NLTF…AFNS), 519–540 (SLQV…PYKC), and 543–563 (SLQV…QELQ). Cysteines 388 and 389 form a disulfide. N-linked (GlcNAc...) asparagine glycans are attached at residues asparagine 495 and asparagine 524. Asparagine 573 carries an N-linked (GlcNAc...) asparagine glycan. Residues 577–627 (NDFACTCEHQSFLQWIKDQRQLLVEVERMECATPSDKQGMPVLSLNITCQM) form the LRRCT domain. Intrachain disulfides connect cysteine 581–cysteine 607 and cysteine 583–cysteine 625. Asparagine 622 and asparagine 628 each carry an N-linked (GlcNAc...) asparagine glycan. Residues 630-650 (TVIGVSVFSVLVVSVVAVLVY) form a helical membrane-spanning segment. At 651–828 (KFYFHLMLLA…WNPEGTVGTG (178 aa)) the chain is on the cytoplasmic side. In terms of domain architecture, TIR spans 670 to 813 (NTYDAFVIYS…IFWRRLRKAL (144 aa)).

This sequence belongs to the Toll-like receptor family. In terms of assembly, belongs to the lipopolysaccharide (LPS) receptor, a multi-protein complex containing at least CD14, LY96 and TLR4. Binding to bacterial LPS leads to homodimerization. Interacts with LY96 via the extracellular domain. Interacts with MYD88 and TIRAP via their respective TIR domains. Interacts with TICAM2. Interacts with NOX4. Interacts with CNPY3 and HSP90B1; this interaction is required for proper folding in the endoplasmic reticulum. Interacts with MAP3K21; this interaction leads to negative regulation of TLR4 signaling. Interacts with CD36, following CD36 stimulation by oxLDL or amyloid-beta 42, and forms a heterodimer with TLR6. The trimeric complex is internalized and triggers inflammatory response. LYN kinase activity facilitates TLR4-TLR6 heterodimerization and signal initiation. Interacts with TICAM1 in response to LPS in a WDFY1-dependent manner. Interacts with WDFY1 in response to LPS. Interacts with SMPDL3B. Interacts with CEACAM1; upon lipopolysaccharide stimulation, forms a complex including TLR4 and the phosphorylated form of SYK and CEACAM1, which in turn, recruits PTPN6 that dephosphorylates SYK, reducing the production of reactive oxygen species (ROS) and lysosome disruption, which in turn, reduces the activity of the inflammasome. Interacts with RFTN1; the interaction occurs in response to lipopolysaccharide stimulation. Interacts with SCIMP; the interaction occurs in response to lipopolysaccharide stimulation and is enhanced by phosphorylation of SCIMP by LYN. This interaction facilitates the phosphorylation of TLR4 by LYN which elicits a selective cytokine response in macrophages. Interacts with TRAF3IP3. Interacts with TREM1; this interaction enhances TLR4-mediated inflammatory response. Interacts with ZG16B/PAUF. Interacts with CD82; this interaction inhibits TLR4-mediated signaling pathway. Post-translationally, phosphorylated on tyrosine residues by LYN after binding lipopolysaccharide. In terms of processing, ubiquitinated by RNF128 via 'Lys-28'-linked polyubiquitin chains, leading to proteasomal degradation.

It localises to the cell membrane. The protein resides in the early endosome. It is found in the cell projection. The protein localises to the ruffle. In terms of biological role, transmembrane receptor that functions as a pattern recognition receptor recognizing pathogen- and damage-associated molecular patterns (PAMPs and DAMPs) to induce innate immune responses via downstream signaling pathways. At the plasma membrane, cooperates with LY96 to mediate the innate immune response to bacterial lipopolysaccharide (LPS). Also involved in LPS-independent inflammatory responses triggered by free fatty acids, such as palmitate, and Ni(2+). Mechanistically, acts via MYD88, TIRAP and TRAF6, leading to NF-kappa-B activation, cytokine secretion and the inflammatory response. Alternatively, CD14-mediated TLR4 internalization via endocytosis is associated with the initiation of a MYD88-independent signaling via the TICAM1-TBK1-IRF3 axis leading to type I interferon production. In addition to the secretion of proinflammatory cytokines, initiates the activation of NLRP3 inflammasome and formation of a positive feedback loop between autophagy and NF-kappa-B signaling cascade. In complex with TLR6, promotes inflammation in monocytes/macrophages by associating with TLR6 and the receptor CD86. Upon ligand binding, such as oxLDL or amyloid-beta 42, the TLR4:TLR6 complex is internalized and triggers inflammatory response, leading to NF-kappa-B-dependent production of CXCL1, CXCL2 and CCL9 cytokines, via MYD88 signaling pathway, and CCL5 cytokine, via TICAM1 signaling pathway. In myeloid dendritic cells, vesicular stomatitis virus glycoprotein G but not LPS promotes the activation of IRF7, leading to type I IFN production in a CD14-dependent manner. The chain is Toll-like receptor 4 (TLR4) from Pongo pygmaeus (Bornean orangutan).